We begin with the raw amino-acid sequence, 53 residues long: Large ribosomal subunit protein bL33B (53 aa).

It belongs to the bacterial ribosomal protein bL33 family.

This chain is Large ribosomal subunit protein bL33B, found in Sorangium cellulosum (strain So ce56) (Polyangium cellulosum (strain So ce56)).